Reading from the N-terminus, the 588-residue chain is Transmembrane protein 201 homolog (588 aa).

Residues 1-212 (MEVAAAVGVI…FFFAGGSTCE (212 aa)) lie on the Nuclear side of the membrane. The chain crosses the membrane as a helical span at residues 213-233 (ALHFGCLISSIILFLANIDFL). Topologically, residues 234 to 254 (QQDAGASLINLPKALQDILPE) are perinuclear space. Residues 255 to 275 (VYKYSFVINFLIFTTHLIAAF) traverse the membrane as a helical segment. The Nuclear portion of the chain corresponds to 276–280 (NNKCR). A helical membrane pass occupies residues 281-301 (VTLPDLLLPILLILAMLTVLT). At 302-309 (SSDNLSQD) the chain is on the perinuclear space side. A helical membrane pass occupies residues 310–330 (VALVRGACASFSTILSMAVTL). Over 331–564 (LPRKKLHKKR…SGAWQCRVIG (234 aa)) the chain is Nuclear. The interval 378–457 (RRSPHTPSAS…QSTRSSHFKP (80 aa)) is disordered. The segment covering 384–396 (PSASPPAMNSSPP) has biased composition (low complexity). Polar residues-rich tracts occupy residues 418–430 (NMQS…NNHV) and 441–452 (MAAQSVAQSTRS). Residues 565-585 (ILFALVFIVLIMQIGLFYVLF) form a helical membrane-spanning segment. Topologically, residues 586-588 (TRN) are perinuclear space.

The protein belongs to the TMEM201 family.

Its subcellular location is the nucleus inner membrane. Its function is as follows. Plays a role in nuclear migration in hypodermal cells. The chain is Transmembrane protein 201 homolog from Caenorhabditis elegans.